A 136-amino-acid polypeptide reads, in one-letter code: MARTKQTARKSTGGKAPRKQLATKAARKSAPATGGVKKPHRFRPGTVALREIRRYQKSTELLIRKLPFQRLVREIAQDFKTDLRFQSSAVAALQEAAEAYLVGLFEDTNLCAIHAKRVTIMPKDIQLARRIRGERA.

Positions Met1–Arg43 are disordered. Lys5 carries the post-translational modification N6-methylated lysine. At Lys10 the chain carries N6-acetyllysine; alternate. Lys10 is subject to N6-methylated lysine; alternate. Ser11 carries the post-translational modification Phosphoserine. At Thr12 the chain carries Phosphothreonine. Residue Lys15 is modified to N6-acetyllysine. N6-acetyllysine; alternate is present on residues Lys19 and Lys24. Lys19 and Lys24 each carry N6-methylated lysine; alternate. N6-methylated lysine is present on Lys28. Ser29 is modified (phosphoserine). Lys37 carries the post-translational modification N6-methylated lysine.

Belongs to the histone H3 family. In terms of assembly, the nucleosome is a histone octamer containing two molecules each of H2A, H2B, H3 and H4 assembled in one H3-H4 heterotetramer and two H2A-H2B heterodimers. The octamer wraps approximately 147 bp of DNA. In terms of processing, acetylation is generally linked to gene activation. Can be acetylated to form H3K9ac, H3K14ac, H3K18ac and H3K23ac. H3K9ac could compete with H3K9me and prevent gene silencing. H3K9ac is restricted to euchromatin. Methylated to form mainly H3K4me, H3K9me, H3K18me, H3K23me, H3K27me and H3K36me. H3K4me1/2/3, H3K9me3, H3K27me3 and H3K36me1/2/3 are typical marks for euchromatin, whereas heterochromatic chromocenters are enriched in H3K9me1/2 and H3K27me1/2. H2BK143ub1 is probably prerequisite for H3K4me. Post-translationally, can be phosphorylated to form H3S10ph, H3T11ph and H3S28ph.

The protein localises to the nucleus. It is found in the chromosome. Functionally, core component of nucleosome. Nucleosomes wrap and compact DNA into chromatin, limiting DNA accessibility to the cellular machineries which require DNA as a template. Histones thereby play a central role in transcription regulation, DNA repair, DNA replication and chromosomal stability. DNA accessibility is regulated via a complex set of post-translational modifications of histones, also called histone code, and nucleosome remodeling. The sequence is that of Histone H3.2 from Encephalartos altensteinii (Altenstein's bread tree).